Reading from the N-terminus, the 147-residue chain is Sec-independent protein translocase protein TatB (147 aa).

A helical membrane pass occupies residues 1–21 (MFDFGFSELIVIAVVTLIVVG). The disordered stretch occupies residues 117 to 147 (APAPMSLAPHGDAASAGREPAAVPGSGPEKA).

This sequence belongs to the TatB family. As to quaternary structure, the Tat system comprises two distinct complexes: a TatABC complex, containing multiple copies of TatA, TatB and TatC subunits, and a separate TatA complex, containing only TatA subunits. Substrates initially bind to the TatABC complex, which probably triggers association of the separate TatA complex to form the active translocon.

It is found in the cell inner membrane. Its function is as follows. Part of the twin-arginine translocation (Tat) system that transports large folded proteins containing a characteristic twin-arginine motif in their signal peptide across membranes. Together with TatC, TatB is part of a receptor directly interacting with Tat signal peptides. TatB may form an oligomeric binding site that transiently accommodates folded Tat precursor proteins before their translocation. The sequence is that of Sec-independent protein translocase protein TatB from Aromatoleum aromaticum (strain DSM 19018 / LMG 30748 / EbN1) (Azoarcus sp. (strain EbN1)).